The chain runs to 415 residues: Beta-1,4-glucuronyltransferase 1 (415 aa).

The Cytoplasmic segment spans residues 1 to 8; that stretch reads MQMSYAIR. A helical; Signal-anchor for type II membrane protein transmembrane segment spans residues 9–36; that stretch reads CAFYQLLLAALMLVAMLQLLYLSLLSGL. The Lumenal portion of the chain corresponds to 37–415; that stretch reads HGQEEQDQYF…AKYPNSPRRC (379 aa). N204 carries an N-linked (GlcNAc...) asparagine glycan. The Mn(2+) site is built by D227 and D229. An N-linked (GlcNAc...) asparagine glycan is attached at N300.

The protein belongs to the glycosyltransferase 49 family. In terms of assembly, interacts with LARGE1 and LARGE2. The cofactor is Mn(2+). In the adult, highly expressed in heart, brain, skeletal muscle and kidney and to a lesser extent in placenta, pancreas, spleen, prostate, testis, ovary, small intestine and colon. Very weak expression in lung, liver, thymus and peripheral blood leukocytes. In fetal highly expressed in brain and kidney and to a lesser extent in lung and liver.

Its subcellular location is the golgi apparatus membrane. It catalyses the reaction 3-O-[beta-D-Xyl-(1-&gt;4)-Rib-ol-P-Rib-ol-P-3-beta-D-GalNAc-(1-&gt;3)-beta-D-GlcNAc-(1-&gt;4)-(O-6-P-alpha-D-Man)]-Thr-[protein] + UDP-alpha-D-glucuronate = 3-O-[beta-D-GlcA-(1-&gt;3)-beta-D-Xyl-(1-&gt;4)-Rib-ol-P-Rib-ol-P-3-beta-D-GalNAc-(1-&gt;3)-beta-D-GlcNAc-(1-&gt;4)-(O-6-P-alpha-D-Man)]-Thr-[protein] + UDP + H(+). It functions in the pathway protein modification; protein glycosylation. In terms of biological role, beta-1,4-glucuronyltransferase involved in O-mannosylation of alpha-dystroglycan (DAG1). Transfers a glucuronic acid (GlcA) residue onto a xylose (Xyl) acceptor to produce the glucuronyl-beta-1,4-xylose-beta disaccharide primer, which is further elongated by LARGE1, during synthesis of phosphorylated O-mannosyl glycan. Phosphorylated O-mannosyl glycan is a carbohydrate structure present in alpha-dystroglycan (DAG1), which is required for binding laminin G-like domain-containing extracellular proteins with high affinity. Required for axon guidance; via its function in O-mannosylation of alpha-dystroglycan (DAG1). The protein is Beta-1,4-glucuronyltransferase 1 of Homo sapiens (Human).